Here is a 374-residue protein sequence, read N- to C-terminus: SKP1-interacting partner 15 (374 aa).

Positions S3–I48 constitute an F-box domain.

Part of a SCF (ASK-cullin-F-box) protein ligase complex. Interacts with SKP1A/ASK1, SKP1B/ASK2, ASK11 and ASK13.

Its subcellular location is the nucleus. It functions in the pathway protein modification; protein ubiquitination. Its function is as follows. Component of SCF(ASK-cullin-F-box) E3 ubiquitin ligase complexes, which may mediate the ubiquitination and subsequent proteasomal degradation of target proteins. The protein is SKP1-interacting partner 15 (SKIP15) of Arabidopsis thaliana (Mouse-ear cress).